We begin with the raw amino-acid sequence, 681 residues long: Rabphilin-3A (681 aa).

The tract at residues 1–21 is disordered; the sequence is MTDTVVNRWMYPGDGPLQSND. In terms of domain architecture, RabBD spans 40-157; that stretch reads QRKQEELTDE…KRSGAWFFKG (118 aa). The segment at 88 to 145 adopts an FYVE-type zinc-finger fold; it reads GDGVNRCILCGEQLGMLGSACVVCEDCKKNVCTKCGVETSNNRPHPVWLCKICLEQRE. 8 residues coordinate Zn(2+): cysteine 94, cysteine 97, cysteine 111, cysteine 114, cysteine 119, cysteine 122, cysteine 137, and cysteine 140. Residues 162–375 form a disordered region; the sequence is VLPQPMPIKK…EEEANSYDSD (214 aa). Positions 199–208 are enriched in basic and acidic residues; sequence ARGDMEDRRP. Arginine 223 is subject to Omega-N-methylarginine. Residues 243–252 show a composition bias toward basic and acidic residues; that stretch reads RDSEGWDHAH. Position 271 is a phosphoserine (serine 271). Pro residues predominate over residues 278 to 296; sequence APAPVPSPAPPQPVQPGPP. Residues 347–356 are compositionally biased toward low complexity; sequence AAPYSQAAPA. A compositionally biased stretch (acidic residues) spans 362–375; sequence AEEEEEEANSYDSD. The 123-residue stretch at 379 to 501 folds into the C2 1 domain; sequence TLGALEFSLL…KANQRKNFNI (123 aa). Residues methionine 409, aspartate 410, aspartate 416, aspartate 471, glutamate 472, aspartate 473, glutamate 479, glutamate 526, aspartate 568, aspartate 574, aspartate 628, tyrosine 629, aspartate 630, and aspartate 636 each coordinate Ca(2+). The C2 2 domain maps to 537–670; the sequence is ERGKILVSLM…NKDKKIERWH (134 aa). Phosphoserine is present on residues serine 679 and serine 680.

Interacts with RAB3B, RAB3C, RAB3D, RAB8A, RAB27A and RAB27B. Interacts with RAB3A; this interaction recruits RPH3A to synaptic vesicules. Interacts (via C2B domain) with SNAP25. Interacts with deubiquitinating enzyme CAND1; this interaction results in the deubiquitination of RPH3A. Interacts with GRIN2A and DLG4; this ternary complex regulates NMDA receptor composition at postsynaptic membranes. Interacts with SNCA. The cofactor is Ca(2+). Ubiquitinated. Deubiquitinated by CAND1 to prevent its degradation. As to expression, specifically expressed in brain.

It is found in the cytoplasmic vesicle. Its subcellular location is the secretory vesicle. The protein localises to the synaptic vesicle membrane. It localises to the cell projection. The protein resides in the dendritic spine. It is found in the postsynaptic cell membrane. Its subcellular location is the membrane. In terms of biological role, plays an essential role in docking and fusion steps of regulated exocytosis. At the presynaptic level, RPH3A is recruited by RAB3A to the synaptic vesicle membrane in a GTP-dependent manner where it modulates synaptic vesicle trafficking and calcium-triggered neurotransmitter release. In the post-synaptic compartment, forms a ternary complex with GRIN2A and DLG4 and regulates NMDA receptor stability. Also plays a role in the exocytosis of arginine vasopressin hormone. In Mus musculus (Mouse), this protein is Rabphilin-3A (Rph3a).